Reading from the N-terminus, the 246-residue chain is UPF0758 protein SSU98_1084 (246 aa).

In terms of domain architecture, MPN spans 103-225 (RILGSEKLGR…YYSFREESDV (123 aa)). Residues histidine 174, histidine 176, and aspartate 187 each coordinate Zn(2+). Positions 174 to 187 (HNHPSGSVQPSRND) match the JAMM motif motif.

It belongs to the UPF0758 family.

This chain is UPF0758 protein SSU98_1084, found in Streptococcus suis (strain 98HAH33).